The chain runs to 77 residues: Acyl carrier protein (77 aa).

A Carrier domain is found at 2 to 77 (ADVMERVTKI…DVVDYINNNQ (76 aa)). An O-(pantetheine 4'-phosphoryl)serine modification is found at Ser37.

This sequence belongs to the acyl carrier protein (ACP) family. In terms of processing, 4'-phosphopantetheine is transferred from CoA to a specific serine of apo-ACP by AcpS. This modification is essential for activity because fatty acids are bound in thioester linkage to the sulfhydryl of the prosthetic group.

It is found in the cytoplasm. The protein operates within lipid metabolism; fatty acid biosynthesis. Carrier of the growing fatty acid chain in fatty acid biosynthesis. The protein is Acyl carrier protein of Shouchella clausii (strain KSM-K16) (Alkalihalobacillus clausii).